Here is a 239-residue protein sequence, read N- to C-terminus: 1-(5-phosphoribosyl)-5-[(5-phosphoribosylamino)methylideneamino] imidazole-4-carboxamide isomerase (239 aa).

Residue D8 is the Proton acceptor of the active site. D129 acts as the Proton donor in catalysis.

It belongs to the HisA/HisF family.

It localises to the cytoplasm. The enzyme catalyses 1-(5-phospho-beta-D-ribosyl)-5-[(5-phospho-beta-D-ribosylamino)methylideneamino]imidazole-4-carboxamide = 5-[(5-phospho-1-deoxy-D-ribulos-1-ylimino)methylamino]-1-(5-phospho-beta-D-ribosyl)imidazole-4-carboxamide. It functions in the pathway amino-acid biosynthesis; L-histidine biosynthesis; L-histidine from 5-phospho-alpha-D-ribose 1-diphosphate: step 4/9. This is 1-(5-phosphoribosyl)-5-[(5-phosphoribosylamino)methylideneamino] imidazole-4-carboxamide isomerase from Legionella pneumophila (strain Paris).